We begin with the raw amino-acid sequence, 211 residues long: SAGA-associated factor 11 homolog 1 (211 aa).

The segment at 115 to 136 (CTCPNCDRLVAAARFAPHLEKC) adopts an SGF11-type zinc-finger fold. Residues 149–211 (RRLATKEGSS…GSKKNNGKTF (63 aa)) are disordered. A compositionally biased stretch (low complexity) spans 157–166 (SSASTSSTST). Ser-187 carries the phosphoserine modification. Low complexity predominate over residues 197–211 (SSRNNGSKKNNGKTF).

It belongs to the SGF11 family. In terms of assembly, component of some SAGA transcription coactivator-HAT complexes, at least composed of Ada2b, not/nonstop, Pcaf/Gcn5, Sgf11 and Spt3. Within the SAGA complex, Sgf11, e(y)2, and not/nonstop form an additional subcomplex of SAGA called the DUB module (deubiquitination module). Interacts directly with not/nonstop. Interacts with the AMEX complex component xmas-2. Interacts with Cbp80; important for promoter recruitment of Sgf11 that is not associated with the DUB module.

It localises to the nucleus. The protein resides in the nucleoplasm. It is found in the cytoplasm. Component of the transcription regulatory histone acetylation (HAT) complex SAGA, a multiprotein complex that activates transcription by remodeling chromatin and mediating histone acetylation and deubiquitination. Within the SAGA complex, participates in a subcomplex that specifically deubiquitinates histone H2B. The SAGA complex is recruited to specific gene promoters by activators, where it is required for transcription. Required for nuclear receptor-mediated transactivation. Binds independently on SAGA to promoters in an RNA-dependent manner. Binds to mRNA and is essential for total mRNA export from the nucleus. Required to counteract heterochromatin silencing. Controls the development of neuronal connectivity in visual system by being required for accurate axon targeting in the optic lobe. Required for expression of ecdysone-induced genes such as br/broad. This chain is SAGA-associated factor 11 homolog 1, found in Drosophila grimshawi (Hawaiian fruit fly).